A 544-amino-acid chain; its full sequence is Ell-associated factor Eaf (544 aa).

The interval Gln-147–Asp-544 is disordered. Over residues Ser-193–Pro-202 the composition is skewed to basic and acidic residues. Ser-205 is subject to Phosphoserine. Over residues Ser-264 to Gly-273 the composition is skewed to low complexity. The segment covering Gly-287–Ile-299 has biased composition (basic residues). 3 stretches are compositionally biased toward low complexity: residues Pro-305–Pro-319, Gln-333–Pro-374, and Ala-396–Leu-407. The segment covering Asp-425 to Glu-440 has biased composition (acidic residues). Composition is skewed to low complexity over residues Glu-450–Gln-483, Gln-503–Gln-513, and Asn-526–Asp-544.

It belongs to the EAF family.

The protein resides in the nucleus. Functionally, promotes transcriptional elongation by Su(Tpl)/ELL. Essential for development. The sequence is that of Ell-associated factor Eaf from Drosophila persimilis (Fruit fly).